A 170-amino-acid chain; its full sequence is Small ribosomal subunit protein mS25 (170 aa).

It belongs to the mitochondrion-specific ribosomal protein mS25 family. As to quaternary structure, component of the mitochondrial ribosome small subunit (28S) which comprises a 12S rRNA and about 30 distinct proteins.

Its subcellular location is the mitochondrion. The protein is Small ribosomal subunit protein mS25 (mrps-25) of Caenorhabditis elegans.